Consider the following 357-residue polypeptide: Peptide chain release factor 1 (357 aa).

Residue glutamine 234 is modified to N5-methylglutamine.

Belongs to the prokaryotic/mitochondrial release factor family. In terms of processing, methylated by PrmC. Methylation increases the termination efficiency of RF1.

The protein localises to the cytoplasm. Functionally, peptide chain release factor 1 directs the termination of translation in response to the peptide chain termination codons UAG and UAA. This chain is Peptide chain release factor 1, found in Lactococcus lactis subsp. cremoris (strain SK11).